The sequence spans 259 residues: 3-deoxy-manno-octulosonate cytidylyltransferase (259 aa).

This sequence belongs to the KdsB family.

It localises to the cytoplasm. The enzyme catalyses 3-deoxy-alpha-D-manno-oct-2-ulosonate + CTP = CMP-3-deoxy-beta-D-manno-octulosonate + diphosphate. The protein operates within nucleotide-sugar biosynthesis; CMP-3-deoxy-D-manno-octulosonate biosynthesis; CMP-3-deoxy-D-manno-octulosonate from 3-deoxy-D-manno-octulosonate and CTP: step 1/1. It functions in the pathway bacterial outer membrane biogenesis; lipopolysaccharide biosynthesis. Its function is as follows. Activates KDO (a required 8-carbon sugar) for incorporation into bacterial lipopolysaccharide in Gram-negative bacteria. This chain is 3-deoxy-manno-octulosonate cytidylyltransferase, found in Xanthomonas euvesicatoria pv. vesicatoria (strain 85-10) (Xanthomonas campestris pv. vesicatoria).